The chain runs to 180 residues: UPF0340 protein RBAM_034070 (180 aa).

Belongs to the UPF0340 family.

The polypeptide is UPF0340 protein RBAM_034070 (Bacillus velezensis (strain DSM 23117 / BGSC 10A6 / LMG 26770 / FZB42) (Bacillus amyloliquefaciens subsp. plantarum)).